The following is a 655-amino-acid chain: Katanin p80 WD40 repeat-containing subunit B1 (655 aa).

WD repeat units follow at residues 18–58, 61–100, 103–142, 145–184, 187–226, and 229–269; these read AHGS…CIMS, GHTT…ILRT, GHKA…CVFR, GHTQ…MMAE, EHKG…LIGC, and GETI…DTVP. Positions 316-453 are disordered; sequence VPAEMPISQP…PVPAPQSKPP (138 aa). The span at 358 to 374 shows a compositional bias: basic and acidic residues; it reads KESRAEIQNPEDYKEIF. Residues 415–426 are compositionally biased toward polar residues; that stretch reads PATSNKNNTEQL.

The protein belongs to the WD repeat KATNB1 family. In terms of assembly, interacts with katna1. This interaction enhances the microtubule binding and severing activity of katna1 and also targets this activity to the centrosome.

The protein localises to the cytoplasm. It is found in the cytoskeleton. The protein resides in the microtubule organizing center. It localises to the centrosome. Its subcellular location is the spindle pole. The protein localises to the spindle. Participates in a complex which severs microtubules in an ATP-dependent manner. May act to target the enzymatic subunit of this complex to sites of action such as the centrosome. Microtubule severing may promote rapid reorganization of cellular microtubule arrays and the release of microtubules from the centrosome following nucleation. The polypeptide is Katanin p80 WD40 repeat-containing subunit B1 (katnb1) (Xenopus tropicalis (Western clawed frog)).